The following is a 307-amino-acid chain: MLVCVSLLILIHSVPVSPVTVSSRNPKVEVHEFSDAELSCEFKTEKDTNPRIEWKRKDKEKDVSFVYYGERFVGPFQDRADIEGATVRLRRVTQADAGEYRCEVSAPSDSISLGETNVTLRVLVPPQTPSCDVPSSALTGSQVELRCRDRHSIPPAVYTWYKDNRALPIRHPNATYTVNEFTGVLIPQSHYNPGTVCQHCMYHPNYHIPNTQLTTTFQTHDLNVAAVVSAVVLVCVILFLCAFGVCLAHRQGYFSRHRGRSFWIPHCHGVTHISSQNLNPSEHTQHSGYSHPPKEPQDFKHTQSFML.

The signal sequence occupies residues M1 to P18. An Ig-like V-type domain is found at V19 to S112. The Extracellular segment spans residues V19–A226. Intrachain disulfides connect C40-C102 and C147-C197. In terms of domain architecture, Ig-like C2-type spans P126–A225. A helical transmembrane segment spans residues V227–L247. Topologically, residues A248–L307 are cytoplasmic. Over residues L278 to G288 the composition is skewed to polar residues. Residues L278–L307 are disordered. Residues P292–H301 are compositionally biased toward basic and acidic residues.

This sequence belongs to the immunoglobulin superfamily.

The protein resides in the cell membrane. The protein localises to the cell junction. It is found in the tight junction. Junctional adhesion protein that mediates heterotypic cell-cell interactions to regulate different cellular processes. During myogenesis, it is involved in myocyte fusion through the binding of jam3b on neighboring myocytes. This Danio rerio (Zebrafish) protein is Junctional adhesion molecule 2A (jam2a).